Reading from the N-terminus, the 119-residue chain is Large ribosomal subunit protein uL22 (119 aa).

It belongs to the universal ribosomal protein uL22 family. As to quaternary structure, part of the 50S ribosomal subunit.

In terms of biological role, this protein binds specifically to 23S rRNA; its binding is stimulated by other ribosomal proteins, e.g. L4, L17, and L20. It is important during the early stages of 50S assembly. It makes multiple contacts with different domains of the 23S rRNA in the assembled 50S subunit and ribosome. Its function is as follows. The globular domain of the protein is located near the polypeptide exit tunnel on the outside of the subunit, while an extended beta-hairpin is found that lines the wall of the exit tunnel in the center of the 70S ribosome. The polypeptide is Large ribosomal subunit protein uL22 (Rickettsia peacockii (strain Rustic)).